Consider the following 422-residue polypeptide: 5-hydroxytryptamine receptor 1A (422 aa).

The Extracellular portion of the chain corresponds to 1–38 (MDVFSFGQGNNTTASQEPFGTGGNVTSISDVTFSYQVI). Residues N10, N11, and N24 are each glycosylated (N-linked (GlcNAc...) asparagine). A helical membrane pass occupies residues 39–59 (TSLLLGTLIFCAVLGNACVVA). Topologically, residues 60–73 (AIALERSLQNVANY) are cytoplasmic. The chain crosses the membrane as a helical span at residues 74-98 (LIGSLAVTDLMVSVLVLPMAALYQV). The Extracellular portion of the chain corresponds to 99–107 (LNKWTLGQV). The chain crosses the membrane as a helical span at residues 108–132 (TCDLFIALDVLCCTSSILHLCAIAL). A disulfide bridge connects residues C109 and C187. Residues D116 and C120 each contribute to the serotonin site. The short motif at 133-135 (DRY) is the DRY motif; important for ligand-induced conformation changes element. The Cytoplasmic portion of the chain corresponds to 133-152 (DRYWAITDPIDYVNKRTPRR). The chain crosses the membrane as a helical span at residues 153-174 (AAALISLTWLIGFLISIPPMLG). Residues 175–193 (WRTPEDRSDPDACTISKDH) lie on the Extracellular side of the membrane. A helical membrane pass occupies residues 194-216 (GYTIYSTFGAFYIPLLLMLVLYG). At 217–346 (RIFRAARFRI…LARERKTVKT (130 aa)) the chain is on the cytoplasmic side. Residues 235–261 (KKGAGTSLGTSSAPPPKKSLNGQPGSG) are disordered. The 1D-myo-inositol 4-phosphate site is built by K345, T346, and G352. The helical transmembrane segment at 347-370 (LGIIMGTFILCWLPFFIVALVLPF) threads the bilayer. Over 371 to 378 (CESSCHMP) the chain is Extracellular. A helical membrane pass occupies residues 379 to 403 (ALLGAIINWLGYSNSLLNPVIYAYF). An NPxxY motif; important for ligand-induced conformation changes and signaling motif is present at residues 396-400 (NPVIY). 1D-myo-inositol 4-phosphate-binding residues include F403, N404, and K405. Over 404–422 (NKDFQNAFKKIIKCKFCRR) the chain is Cytoplasmic.

It belongs to the G-protein coupled receptor 1 family. 5-hydroxytryptamine receptor subfamily. HTR1A sub-subfamily. In terms of assembly, heterodimer; heterodimerizes with GPER1. Interacts with YIF1B. Interacts with GPR39 and GALR1. Detected in hypothalamus, mesencephalon, amygdala, medulla, thalamus, septum and hippocampus.

It is found in the cell membrane. Its subcellular location is the cell projection. The protein localises to the dendrite. With respect to regulation, G-protein coupled receptor activity is regulated by lipids: phosphatidylinositol 4-phosphate increases HTR1A-mediated activity. Functionally, G-protein coupled receptor for 5-hydroxytryptamine (serotonin). Also functions as a receptor for various drugs and psychoactive substances. Ligand binding causes a conformation change that triggers signaling via guanine nucleotide-binding proteins (G proteins) and modulates the activity of downstream effectors, such as adenylate cyclase. HTR1A is coupled to G(i)/G(o) G alpha proteins and mediates inhibitory neurotransmission: signaling inhibits adenylate cyclase activity and activates a phosphatidylinositol-calcium second messenger system that regulates the release of Ca(2+) ions from intracellular stores. Beta-arrestin family members regulate signaling by mediating both receptor desensitization and resensitization processes. The protein is 5-hydroxytryptamine receptor 1A of Rattus norvegicus (Rat).